The sequence spans 1139 residues: Retinoblastoma-like protein 2 (1139 aa).

The interval 1–45 is disordered; the sequence is MPSGGDQSPPPPPPPPAAAASDEEEEDDGEAEDAAPPAESPTPQI. The span at 8–17 shows a compositional bias: pro residues; it reads SPPPPPPPPA. The segment covering 21–33 has biased composition (acidic residues); that stretch reads SDEEEEDDGEAED. Serine 413 carries the phosphoserine modification. Threonine 417 carries the post-translational modification Phosphothreonine. The domain A stretch occupies residues 417–616; it reads TPVSTATHSL…EKIRDNENRV (200 aa). Positions 417–1024 are pocket; binds E1A; sequence TPVSTATHSL…KQIKTFAMKY (608 aa). A glycan (O-linked (GlcNAc) serine) is linked at serine 420. Residues 617–827 are spacer; that stretch reads PTCEEVMPPQ…KQGQSVTSSS (211 aa). Phosphoserine is present on serine 639. Phosphothreonine is present on threonine 642. The tract at residues 654-678 is disordered; the sequence is GGLGRSITSPTTLYDRYSSPPASTT. A phosphoserine mark is found at serine 662, serine 672, and serine 688. Over residues 810–827 the composition is skewed to low complexity; sequence ISPGGQQQKQGQSVTSSS. Disordered stretches follow at residues 810–831 and 933–999; these read ISPGGQQQKQGQSVTSSSNRPR and KGKR…DMEE. A domain B region spans residues 828 to 1024; that stretch reads NRPRKTSSLS…KQIKTFAMKY (197 aa). Positions 941–955 are enriched in polar residues; the sequence is SGSSDSRSHQNSPTE. Phosphoserine is present on residues serine 948, serine 952, serine 966, serine 971, serine 972, and serine 973. The segment covering 964–973 has biased composition (low complexity); that stretch reads DSSPVMRSSS. Position 974 is a phosphothreonine (threonine 974). A compositionally biased stretch (pro residues) spans 977–987; it reads VPQPSSAPPTP. Residues serine 981 and serine 982 each carry the phosphoserine modification. At threonine 986 the chain carries Phosphothreonine. Phosphoserine is present on residues serine 1035, serine 1068, serine 1080, and serine 1112.

This sequence belongs to the retinoblastoma protein (RB) family. As to quaternary structure, interacts with AATF. Interacts with KMT5B, KMT5C and USP4. Component of the DREAM complex (also named LINC complex) at least composed of E2F4, E2F5, LIN9, LIN37, LIN52, LIN54, MYBL1, MYBL2, RBL1, RBL2, RBBP4, TFDP1 and TFDP2. The complex exists in quiescent cells where it represses cell cycle-dependent genes. It dissociates in S phase when LIN9, LIN37, LIN52 and LIN54 form a subcomplex that binds to MYBL2. Interacts with RINT1. Interacts with PML (isoform PML-1, isoform PML-2, isoform PML-3, isoform PML-4 and isoform PML-5). Interacts with RBBP9. Interacts with CD53. (Microbial infection) Interacts with JC virus small t antigen. In terms of processing, during G0 and early G1 phase of the cell cycle, phosphorylated on Ser-639 and on 5 sites within the domain B. Phosphorylation on Ser-672 in G1 leads to its ubiquitin-dependent proteolysis.

Its subcellular location is the nucleus. In terms of biological role, key regulator of entry into cell division. Directly involved in heterochromatin formation by maintaining overall chromatin structure and, in particular, that of constitutive heterochromatin by stabilizing histone methylation. Recruits and targets histone methyltransferases KMT5B and KMT5C, leading to epigenetic transcriptional repression. Controls histone H4 'Lys-20' trimethylation. Probably acts as a transcription repressor by recruiting chromatin-modifying enzymes to promoters. Potent inhibitor of E2F-mediated trans-activation, associates preferentially with E2F5. Binds to cyclins A and E. Binds to and may be involved in the transforming capacity of the adenovirus E1A protein. May act as a tumor suppressor. The sequence is that of Retinoblastoma-like protein 2 (RBL2) from Homo sapiens (Human).